The chain runs to 496 residues: Probable G-protein coupled receptor Mth-like 5 (496 aa).

Topologically, residues M1–N219 are extracellular. An N-linked (GlcNAc...) asparagine glycan is attached at N82. A helical membrane pass occupies residues P220–L240. Residues P241–L246 are Cytoplasmic-facing. Residues V247–V267 form a helical membrane-spanning segment. Residues R268–H276 are Extracellular-facing. The chain crosses the membrane as a helical span at residues V277–L297. Topologically, residues N298–S327 are cytoplasmic. A helical transmembrane segment spans residues A328–L348. Over D349–G366 the chain is Extracellular. A helical transmembrane segment spans residues W367–F387. Residues Y388 to N411 are Cytoplasmic-facing. The chain crosses the membrane as a helical span at residues F412 to S432. Residues W433 to G438 are Extracellular-facing. The helical transmembrane segment at L439–V459 threads the bilayer. Topologically, residues L460–Y496 are cytoplasmic.

Belongs to the G-protein coupled receptor 2 family. Mth subfamily.

Its subcellular location is the cell membrane. The polypeptide is Probable G-protein coupled receptor Mth-like 5 (mthl5) (Drosophila melanogaster (Fruit fly)).